The chain runs to 554 residues: Chaperonin GroEL (554 aa).

ATP-binding positions include Thr29–Pro32, Lys50, Asp86–Thr90, Gly414, and Asp495.

It belongs to the chaperonin (HSP60) family. In terms of assembly, forms a cylinder of 14 subunits composed of two heptameric rings stacked back-to-back. Interacts with the co-chaperonin GroES.

The protein resides in the cytoplasm. The catalysed reaction is ATP + H2O + a folded polypeptide = ADP + phosphate + an unfolded polypeptide.. In terms of biological role, together with its co-chaperonin GroES, plays an essential role in assisting protein folding. The GroEL-GroES system forms a nano-cage that allows encapsulation of the non-native substrate proteins and provides a physical environment optimized to promote and accelerate protein folding. This chain is Chaperonin GroEL, found in Pelagibacter ubique (strain HTCC1062).